Reading from the N-terminus, the 316-residue chain is Remorin 4.1 (316 aa).

3 disordered regions span residues 1–108 (MLSE…PSEL), 125–202 (NANA…SVGQ), and 267–287 (AQNE…SAEA). Residues 40 to 53 (EREEEVVVEEELEE) show a composition bias toward acidic residues. The segment covering 92-104 (RHTSIRSVGSDTA) has biased composition (polar residues). Positions 125–135 (NANAAAAAAAN) are enriched in low complexity. Basic and acidic residues-rich tracts occupy residues 143–153 (GVDDALGRIGE) and 277–287 (KAEEKRASAEA). Residues 242–288 (VEKANAWLKKYERKLEEKRAKAMEKAQNEVAKARRKAEEKRASAEAK) adopt a coiled-coil conformation.

The protein belongs to the remorin family. In terms of assembly, interacts with BAK1. Post-translationally, phosphorylated by BRI1. Phosphorylation reduces the binding affinity to BAK1. In terms of tissue distribution, expressed in roots, leaf blades and leaf sheaths. Expressed at low levels in stems and spikelets.

Its subcellular location is the cell membrane. Functions in abscisic acid (ABA) signaling downstream of BZIP23. Acts as antagonistic and negative regulator of brassinosteroid (BR) signaling. Binds to BAK1 and inhibits its interaction with the BR receptor BRI1. Inhibits the formation and subsequent activation of the BRI1-BAK1 receptor complex. This is Remorin 4.1 from Oryza sativa subsp. japonica (Rice).